The following is a 475-amino-acid chain: Ribulose bisphosphate carboxylase large chain (475 aa).

The propeptide occupies 1–2 (MS). Pro-3 bears the N-acetylproline mark. Residue Lys-14 is modified to N6,N6,N6-trimethyllysine. Residues Asn-123 and Thr-173 each coordinate substrate. The Proton acceptor role is filled by Lys-175. Lys-177 is a substrate binding site. The Mg(2+) site is built by Lys-201, Asp-203, and Glu-204. Lys-201 is subject to N6-carboxylysine. His-294 (proton acceptor) is an active-site residue. The substrate site is built by Arg-295, His-327, and Ser-379.

This sequence belongs to the RuBisCO large chain family. Type I subfamily. In terms of assembly, heterohexadecamer of 8 large chains and 8 small chains. It depends on Mg(2+) as a cofactor.

It is found in the plastid. Its subcellular location is the chloroplast. It carries out the reaction 2 (2R)-3-phosphoglycerate + 2 H(+) = D-ribulose 1,5-bisphosphate + CO2 + H2O. It catalyses the reaction D-ribulose 1,5-bisphosphate + O2 = 2-phosphoglycolate + (2R)-3-phosphoglycerate + 2 H(+). Functionally, ruBisCO catalyzes two reactions: the carboxylation of D-ribulose 1,5-bisphosphate, the primary event in carbon dioxide fixation, as well as the oxidative fragmentation of the pentose substrate in the photorespiration process. Both reactions occur simultaneously and in competition at the same active site. This Nymphaea alba (White water-lily) protein is Ribulose bisphosphate carboxylase large chain.